The chain runs to 288 residues: ATP synthase gamma chain (288 aa).

It belongs to the ATPase gamma chain family. F-type ATPases have 2 components, CF(1) - the catalytic core - and CF(0) - the membrane proton channel. CF(1) has five subunits: alpha(3), beta(3), gamma(1), delta(1), epsilon(1). CF(0) has three main subunits: a, b and c.

It is found in the cell inner membrane. In terms of biological role, produces ATP from ADP in the presence of a proton gradient across the membrane. The gamma chain is believed to be important in regulating ATPase activity and the flow of protons through the CF(0) complex. This is ATP synthase gamma chain from Actinobacillus pleuropneumoniae serotype 5b (strain L20).